Here is a 251-residue protein sequence, read N- to C-terminus: Adenosine 5'-phosphosulfate reductase (251 aa).

[4Fe-4S] cluster contacts are provided by C121, C122, C204, and C207. C232 (nucleophile; cysteine thiosulfonate intermediate) is an active-site residue.

It belongs to the PAPS reductase family. CysH subfamily. It depends on [4Fe-4S] cluster as a cofactor.

It is found in the cytoplasm. It carries out the reaction [thioredoxin]-disulfide + sulfite + AMP + 2 H(+) = adenosine 5'-phosphosulfate + [thioredoxin]-dithiol. It participates in sulfur metabolism; hydrogen sulfide biosynthesis; sulfite from sulfate. Its function is as follows. Catalyzes the formation of sulfite from adenosine 5'-phosphosulfate (APS) using thioredoxin as an electron donor. This is Adenosine 5'-phosphosulfate reductase from Sinorhizobium fredii (strain NBRC 101917 / NGR234).